Reading from the N-terminus, the 452-residue chain is Zinc finger protein 672 (452 aa).

C2H2-type zinc fingers lie at residues 14-36 (YSCS…ERAH), 42-64 (FRCL…RRTH), 70-92 (YICS…LGAH), and 99-122 (CPCR…RRQH). The C2H2-type 5; degenerate zinc finger occupies 128–150 (RRCPLCARTFRQSALLFHQARAH). 9 C2H2-type zinc fingers span residues 163 to 185 (HRCA…ARIH), 199 to 221 (HQCG…LQTH), 227 to 249 (FKCP…QRTH), 255 to 277 (YACG…RRSH), 283 to 305 (HACA…QRIH), 311 to 333 (FACP…RRTH), 339 to 361 (YRCE…RRNH), 367 to 389 (HKCP…RKTH), and 395 to 417 (AECA…QRAH).

Belongs to the krueppel C2H2-type zinc-finger protein family.

It is found in the nucleus. Its function is as follows. May be involved in transcriptional regulation. The polypeptide is Zinc finger protein 672 (Homo sapiens (Human)).